Reading from the N-terminus, the 507-residue chain is Cytochrome P450 4X1 (507 aa).

A helical transmembrane segment spans residues leucine 14–leucine 34. Cysteine 452 is a heme binding site.

Belongs to the cytochrome P450 family. Requires heme as cofactor. Expressed in brain and aorta. In the brain, expressed in the Purkinje cells of the cerebellum, pyramidal neurons in the dentate gyrus of the hippocampus, cortical forebrain neurons and those of brain stem nuclei (at protein level). In addition to neurons, also expressed in cerebral vascular endothelial cells (at protein level). Also expressed in epithelial cells of the choroid plexus (at protein level). Hardly detectable in heart, lung, kidney and spleen.

It localises to the endoplasmic reticulum membrane. Its subcellular location is the microsome membrane. It carries out the reaction N-(5Z,8Z,11Z,14Z-eicosatetraenoyl)-ethanolamine + reduced [NADPH--hemoprotein reductase] + O2 = N-(14,15-epoxy-5Z,8Z,11Z-eicosatrienoyl)-ethanolamine + oxidized [NADPH--hemoprotein reductase] + H2O + H(+). Functionally, a cytochrome P450 monooxygenase that selectively catalyzes the epoxidation of the last double bond of the arachidonoyl moiety of anandamide, potentially modulating endocannabinoid signaling. Has no hydroxylase activity toward various fatty acids, steroids and prostaglandins. Mechanistically, uses molecular oxygen inserting one oxygen atom into a substrate, and reducing the second into a water molecule, with two electrons provided by NADPH via cytochrome P450 reductase (CPR; NADPH-ferrihemoprotein reductase). The protein is Cytochrome P450 4X1 of Mus musculus (Mouse).